The primary structure comprises 180 residues: MNILSRCLMALSRKSRMSIKDVTFSSEGALYTIVISSSTIEQMVSECLKAGVNETGGILIGSYSEDSSTAMIVEATTRPADSLAGRTTFQRGVRGLRPLLHARWKTGLYYVGEWHFHPGGSPEPSGDDFRSMTSIAANSDYQCLEPVMIILGGDPAGSYSLSASVSPRGDAPIRLREVLI.

Residues 33–165 form the MPN domain; that stretch reads IVISSSTIEQ…AGSYSLSASV (133 aa). Glutamate 54 (proton donor/acceptor) is an active-site residue. The Zn(2+) site is built by histidine 115, histidine 117, and aspartate 128.

Belongs to the peptidase M67B family. Cap3 isopeptidase subfamily.

In terms of biological role, metalloprotease priming reversal component of a CBASS antivirus system. CBASS (cyclic oligonucleotide-based antiphage signaling system) provides immunity against bacteriophages. The CD-NTase protein (CdnD) synthesizes cyclic nucleotides in response to infection; these serve as specific second messenger signals. The signals activate a diverse range of effectors, leading to bacterial cell death and thus abortive phage infection. A type II-C(AAG) CBASS system. Reverses the primed state of DncV, the CD-NTase. Cleaves a CdnD-GFP (green fluorescent protein) fusion protein precisely at the C-terminus of CdnD. Overexpression decreases the efficacy of CBASS protection against phage T2. Antagonism of phage defense upon overexpression is CBASS-system specific, Cap3 from this bacteria only antagonizes its cognate CBASS system and not that of C.freundii, E.coli or V.cholerae. Functionally, protects E.coli against phage T2 infection. When the cdnD-cap2-cap3-cap4 operon is introduced in E.coli there is a more than 10(3) decrease in the efficiency of T2 plaque formation. The operon does not protect against phage T5 and only about 10-fold against T7. This Enterobacter hormaechei subsp. hoffmannii (strain UCI 50) protein is CD-NTase/cGAS isopeptidase.